A 541-amino-acid polypeptide reads, in one-letter code: Glutamine-dependent NAD(+) synthetase (541 aa).

A CN hydrolase domain is found at 4 to 243; it reads FKIALAQFSP…EELYYSEFDI (240 aa). E44 acts as the Proton acceptor; for glutaminase activity in catalysis. K111 functions as the For glutaminase activity in the catalytic mechanism. Residue Y117 coordinates L-glutamine. C147 (nucleophile; for glutaminase activity) is an active-site residue. S173 and K179 together coordinate L-glutamine. Position 286 to 293 (286 to 293) interacts with ATP; sequence GLSGGIDS. A deamido-NAD(+)-binding site is contributed by N369. Residue T393 coordinates ATP. 2 residues coordinate deamido-NAD(+): E398 and K510.

The protein in the C-terminal section; belongs to the NAD synthetase family.

The catalysed reaction is deamido-NAD(+) + L-glutamine + ATP + H2O = L-glutamate + AMP + diphosphate + NAD(+) + H(+). Its pathway is cofactor biosynthesis; NAD(+) biosynthesis; NAD(+) from deamido-NAD(+) (L-Gln route): step 1/1. Its function is as follows. Catalyzes the ATP-dependent amidation of deamido-NAD to form NAD. Uses L-glutamine as a nitrogen source. In vitro, can also use ammonia as donor with comparable specific activity, but cannot use nicotinate mononucleotide (NaMN) as substrate. The chain is Glutamine-dependent NAD(+) synthetase from Acinetobacter baylyi (strain ATCC 33305 / BD413 / ADP1).